Reading from the N-terminus, the 416-residue chain is Putative gustatory receptor 57a (416 aa).

The Cytoplasmic portion of the chain corresponds to 1-13 (MAVLYFFREPETV). A helical membrane pass occupies residues 14 to 34 (FDCAAFICILQFLMGCNGFGI). Topologically, residues 35–48 (RRSTFRISWASRIY) are extracellular. A helical membrane pass occupies residues 49–69 (SMSVAIAAFCCLFGSLSVLLA). Over 70–83 (EEDIRERLAKADNL) the chain is Cytoplasmic. A helical membrane pass occupies residues 84–104 (VLSISALELLMSTLVFGVTVI). The Extracellular portion of the chain corresponds to 105 to 143 (SLQVFARRHLGIYQRLAALDARLMSDFGANLNYRKMLRK). Residues 144-164 (NIAVLGIVTTIYLMAINSAAV) traverse the membrane as a helical segment. Topologically, residues 165–171 (QVASGHR) are cytoplasmic. Residues 172 to 192 (ALFLLFALCYTIVTGGPHFTG) form a helical membrane-spanning segment. The Extracellular portion of the chain corresponds to 193–295 (YVHMTLAEML…NEEENGSCYR (103 aa)). N-linked (GlcNAc...) asparagine glycosylation is present at N290. Residues 296–316 (MLGYLALVMIPPLYKLLIAPF) traverse the membrane as a helical segment. Residues 317 to 374 (YCDRTIYEARRCLRLVEKLDDWFPQKSSLRPLVESLMSWRIQAKIQFTSGLDVVLSRK) are Cytoplasmic-facing. The helical transmembrane segment at 375–395 (VIGLFTSILVNYLLILIQFAM) threads the bilayer. Residues 396 to 416 (TQKMGEQIEQQKIALQEWIGF) are Extracellular-facing.

It belongs to the insect chemoreceptor superfamily. Gustatory receptor (GR) family. Gr57a subfamily. In larvae, is expressed in neurons of the terminal external chemosensory organ as well as in the dorsal pharyngeal sense organ.

It is found in the cell membrane. In terms of biological role, probable gustatory receptor which mediates acceptance or avoidance behavior, depending on its substrates. The sequence is that of Putative gustatory receptor 57a (Gr57a) from Drosophila melanogaster (Fruit fly).